The primary structure comprises 494 residues: Flagellin A (494 aa).

The protein belongs to the bacterial flagellin family. In terms of assembly, heteromer of FlaA and FlaB. FlaB is located proximal to the hook while the remainder of the filament is composed of the predominant FlaA.

It localises to the secreted. The protein localises to the bacterial flagellum. Functionally, flagellin is the subunit protein which polymerizes to form the filaments of bacterial flagella. Important for motility and virulence. In Helicobacter mustelae, this protein is Flagellin A (flaA).